The following is a 122-amino-acid chain: Large ribosomal subunit protein bL12 (122 aa).

This sequence belongs to the bacterial ribosomal protein bL12 family. In terms of assembly, homodimer. Part of the ribosomal stalk of the 50S ribosomal subunit. Forms a multimeric L10(L12)X complex, where L10 forms an elongated spine to which 2 to 4 L12 dimers bind in a sequential fashion. Binds GTP-bound translation factors.

In terms of biological role, forms part of the ribosomal stalk which helps the ribosome interact with GTP-bound translation factors. Is thus essential for accurate translation. This Yersinia pseudotuberculosis serotype O:1b (strain IP 31758) protein is Large ribosomal subunit protein bL12.